The following is an 827-amino-acid chain: Glycerol-3-phosphate acyltransferase 1, mitochondrial (827 aa).

At 1–87 (MEESSVTVGT…FFNPSIPSLG (87 aa)) the chain is on the cytoplasmic side. The tract at residues 80 to 120 (NPSIPSLGLRNVIYINETHTRHRGWLARRLSYILFVQERDV) is important for mitochondrial localization. Residues 88–118 (LRNVIYINETHTRHRGWLARRLSYILFVQER) lie within the membrane without spanning it. The Cytoplasmic segment spans residues 119–827 (DVHKGMFATS…LEYILSFVVL (709 aa)). Residues 230–235 (HRSHID) carry the HXXXXD motif motif. Positions 278, 279, 288, 293, and 328 each coordinate CoA. A Phosphoserine modification is found at serine 380. Arginine 462 lines the CoA pocket. Residues serine 687 and serine 694 each carry the phosphoserine modification. 2 positions are modified to N6-acetyllysine: lysine 779 and lysine 783.

Belongs to the GPAT/DAPAT family. In terms of tissue distribution, highest levels in liver, intermediate levels in muscle and kidney, and lowest levels in lung and brain.

The protein resides in the mitochondrion outer membrane. It carries out the reaction sn-glycerol 3-phosphate + an acyl-CoA = a 1-acyl-sn-glycero-3-phosphate + CoA. The enzyme catalyses (9Z,12Z)-octadecadienoyl-CoA + sn-glycerol 3-phosphate = 1-(9Z,12Z)-octadecadienoyl-sn-glycero-3-phosphate + CoA. The catalysed reaction is sn-glycerol 3-phosphate + (9Z)-octadecenoyl-CoA = 1-(9Z-octadecenoyl)-sn-glycero-3-phosphate + CoA. It catalyses the reaction sn-glycerol 3-phosphate + octadecanoyl-CoA = 1-octadecanoyl-sn-glycero-3-phosphate + CoA. It carries out the reaction sn-glycerol 3-phosphate + hexadecanoyl-CoA = 1-hexadecanoyl-sn-glycero-3-phosphate + CoA. The enzyme catalyses dodecanoyl-CoA + sn-glycerol 3-phosphate = 1-dodecanoyl-sn-glycerol 3-phosphate + CoA. The catalysed reaction is 1-acyl-sn-glycero-3-phospho-(1'-sn-glycerol) + an acyl-CoA = a 1,2-diacyl-sn-glycero-3-phospho-(1'-sn-glycerol) + CoA. It functions in the pathway phospholipid metabolism; CDP-diacylglycerol biosynthesis; CDP-diacylglycerol from sn-glycerol 3-phosphate: step 1/3. Functionally, mitochondrial membrane protein that catalyzes the essential first step of biosynthesis of glycerolipids such as triglycerides, phosphatidic acids and lysophosphatidic acids. Esterifies acyl-group from acyl-coenzyme A (acyl-CoA) to the sn-1 position of glycerol-3-phosphate, to produce lysophosphatidic acid. Has a narrow hydrophobic binding cleft that selects for a linear acyl chain. Catalytic activity is higher for substrates with a 16-carbon acyl chain. The polypeptide is Glycerol-3-phosphate acyltransferase 1, mitochondrial (Mus musculus (Mouse)).